The primary structure comprises 374 residues: 2-oxoglutarate-Fe(II) type oxidoreductase ppzC (374 aa).

The segment at 111–130 (KDGPFDSGYRGPGTQRVNPT) is disordered. The Fe2OG dioxygenase domain maps to 220-330 (YPDASLEINF…RVSMPFFWGF (111 aa)). Residues His254, Asp256, and His311 each contribute to the Fe cation site. Arg321 is a 2-oxoglutarate binding site.

This sequence belongs to the iron/ascorbate-dependent oxidoreductase family. Fe(2+) serves as cofactor.

The enzyme catalyses peramine + 2-oxoglutarate + O2 = 8-hydroxyperamine + succinate + CO2. It participates in secondary metabolite biosynthesis. 2-oxoglutarate-Fe(II) type oxidoreductase; part of the gene cluster that mediates the biosynthesis of pyrrolopyrazines, secondary metabolites showing insecticidal activity. Within the pathway, ppzC uses peramine as substrate for hydroxylation to yield the novel analog 8-hydroxyperamine. The single multifunctional NRPS ppzA is sufficient to produce peramine via condensation of 1-pyrroline-5-carboxylate and arginine, N-methylation of the alpha-amino group of arginine and reduction of the thioester and the cyclization to form an iminium ion resulting in release from the peptide synthetase. Deprotonation of this intermediate and oxidation of the pyrroline ring would give rise to peramine. In Epichloe species that produce only peramine, the peramine synthetase gene is not localized in a gene cluster, in contrast to Metarhizium species that contain additional pyrrolopyrazine biosynthesis genes. The 2-oxoglutarate-Fe(II) type oxidoreductase ppzC hydroxylates peramine to yield the newly identified compound 8-hydroxyperamine whereas ppzD converts L-proline into trans-4-hydroxy-L-proline, a precursor of peramine biosynthesis. The polypeptide is 2-oxoglutarate-Fe(II) type oxidoreductase ppzC (Metarhizium rileyi (strain RCEF 4871) (Nomuraea rileyi)).